A 282-amino-acid polypeptide reads, in one-letter code: Complement component 1 Q subcomponent-binding protein, mitochondrial (282 aa).

Residues 1-73 (MLPLLRCVPR…PCACGCGCGS (73 aa)) constitute a mitochondrion transit peptide. The segment at 76 to 93 (TDGDKAFVDFLSDEIKEE) is C1q binding. S87 carries the post-translational modification Phosphoserine. K91 carries the post-translational modification N6-acetyllysine. Residues 138–164 (SIPPTFDGEEEPSQGQKVEEQEPELTS) are disordered. An interaction with MAVS region spans residues 168-213 (FVVEVIKNDDGKKALVLDCHYPEDEVGQEDEAESDIFSIREVSFQS). Position 188 is a phosphotyrosine (Y188). Phosphoserine occurs at positions 201 and 205. T214 is subject to Phosphothreonine.

The protein belongs to the MAM33 family. Homotrimer; three monomers form a donut-shaped structure with an unusually asymmetric charge distribution on the surface. Interacts with CDK13, HRK, VTN, NFYB, ADRA1B, FOXC1, DDX21, DDX50, NCL, SRSF1, SRSF9 and CDKN2A isoform smARF. Interacts with CD93; the association may represent a cell surface C1q receptor. Interacts with KRT1; the association represents a cell surface kininogen receptor. Interacts with CD209; the interaction is indicative for a C1q:C1QBP:CD209 signaling complex. Interacts with FBL and RRP1; the respective interactions with C1QBP are competitive. Probably associates with the mitoribosome. Interacts with MAVS; the interaction occurs upon viral transfection. Interacts with PPIF. Interacts with U2AF1L4. Interacts with PLEKHN1. Interacts with VGF-derived peptide TLQP-21. Interacts with POLGARF which is produced from an alternative reading frame of the POLG gene; the interaction results in nucleolar localization of C1QBP, probably due to prevention of C1QBP maturation and redirection from mitochondria to nucleoli. Interacts with MRE11 and RAD50; forming the MRC (MRE11-RAD50-C1QBP) complex that inhibits the activity of MRE11. In terms of assembly, (Microbial infection) Interacts with Rubella virus capsid protein; the interaction occurs in mitochondria. Interacts with Rubella virus protease/methyltransferase p150. As to quaternary structure, (Microbial infection) Interacts with Staphylococcus aureus protein A/spa. (Microbial infection) Interacts with Staphylococcus aureus protein A/spa, HIV-1 Tat and HCV core protein. In terms of assembly, (Microbial infection) Interacts with HIV-1 Tat and HCV core protein. As to quaternary structure, (Microbial infection) Interacts with L.monocytogenes internalin B. (Microbial infection) Interacts with Epstein-Barr virus EBNA1. Expressed on cell surface of peripheral blood cells (at protein level); Surface expression is reported for macrophages and monocyte-derived dendritic cells.

The protein resides in the mitochondrion matrix. It is found in the nucleus. Its subcellular location is the nucleolus. It localises to the cell membrane. The protein localises to the secreted. The protein resides in the cytoplasm. Functionally, multifunctional and multicompartmental protein involved in inflammation and infection processes, ribosome biogenesis, protein synthesis in mitochondria, regulation of apoptosis, transcriptional regulation and pre-mRNA splicing. At the cell surface is thought to act as an endothelial receptor for plasma proteins of the complement and kallikrein-kinin cascades. Putative receptor for C1q; specifically binds to the globular 'heads' of C1q thus inhibiting C1; may perform the receptor function through a complex with C1qR/CD93. In complex with cytokeratin-1/KRT1 is a high affinity receptor for kininogen-1/HMWK. Can also bind other plasma proteins, such as coagulation factor XII leading to its autoactivation. May function to bind initially fluid kininogen-1 to the cell membrane. The secreted form may enhance both extrinsic and intrinsic coagulation pathways. It is postulated that the cell surface form requires docking with transmembrane proteins for downstream signaling which might be specific for a cell-type or response. By acting as C1q receptor is involved in chemotaxis of immature dendritic cells and neutrophils and is proposed to signal through CD209/DC-SIGN on immature dendritic cells, through integrin alpha-4/beta-1 during trophoblast invasion of the decidua, and through integrin beta-1 during endothelial cell adhesion and spreading. Signaling involved in inhibition of innate immune response is implicating the PI3K-AKT/PKB pathway. Required for protein synthesis in mitochondria. In mitochondrial translation may be involved in formation of functional 55S mitoribosomes; the function seems to involve its RNA-binding activity. Acts as a RNA modification reader, which specifically recognizes and binds mitochondrial RNAs modified by C5-methylcytosine (m5C) in response to stress, and promotes recruitment of the mitochondrial degradosome complex, leading to their degradation. May be involved in the nucleolar ribosome maturation process; the function may involve the exchange of FBL for RRP1 in the association with pre-ribosome particles. Involved in regulation of RNA splicing by inhibiting the RNA-binding capacity of SRSF1 and its phosphorylation. Is required for the nuclear translocation of splicing factor U2AF1L4. Involved in regulation of CDKN2A- and HRK-mediated apoptosis. Stabilizes mitochondrial CDKN2A isoform smARF. May be involved in regulation of FOXC1 transcriptional activity and NFY/CCAAT-binding factor complex-mediated transcription. May play a role in antibacterial defense as it can bind to cell surface hyaluronan and inhibit Streptococcus pneumoniae hyaluronate lyase. May be involved in modulation of the immune response; ligation by HCV core protein is resulting in suppression of interleukin-12 production in monocyte-derived dendritic cells. Involved in regulation of antiviral response by inhibiting RIGI- and IFIH1-mediated signaling pathways probably involving its association with MAVS after viral infection. Acts as a regulator of DNA repair via homologous recombination by inhibiting the activity of MRE11: interacts with unphosphorylated MRE11 and RAD50 in absence of DNA damage, preventing formation and activity of the MRN complex. Following DNA damage, dissociates from phosphorylated MRE11, allowing formation of the MRN complex. In terms of biological role, (Microbial infection) Involved in HIV-1 replication, presumably by contributing to splicing of viral RNA. (Microbial infection) In infection processes acts as an attachment site for microbial proteins, including Listeria monocytogenes internalin B (InlB) and Staphylococcus aureus protein A. Its function is as follows. (Microbial infection) Involved in replication of Rubella virus. The protein is Complement component 1 Q subcomponent-binding protein, mitochondrial (C1QBP) of Homo sapiens (Human).